The following is a 455-amino-acid chain: GTPase Der (455 aa).

EngA-type G domains lie at 4–169 (PVVA…PPKS) and 178–353 (IQLA…EQHR). Residues 10 to 17 (GRPNVGKS), 57 to 61 (DTGGL), 120 to 123 (NKCE), 184 to 191 (GRPNVGKS), 231 to 235 (DTAGI), and 296 to 299 (NKWD) contribute to the GTP site. A KH-like domain is found at 354-439 (RRVSTSVVNE…PLKLFWRGKQ (86 aa)).

This sequence belongs to the TRAFAC class TrmE-Era-EngA-EngB-Septin-like GTPase superfamily. EngA (Der) GTPase family. In terms of assembly, associates with the 50S ribosomal subunit.

Its function is as follows. GTPase that plays an essential role in the late steps of ribosome biogenesis. The sequence is that of GTPase Der from Synechococcus sp. (strain WH7803).